A 268-amino-acid chain; its full sequence is Indole-3-glycerol phosphate synthase (268 aa).

This sequence belongs to the TrpC family.

It carries out the reaction 1-(2-carboxyphenylamino)-1-deoxy-D-ribulose 5-phosphate + H(+) = (1S,2R)-1-C-(indol-3-yl)glycerol 3-phosphate + CO2 + H2O. It participates in amino-acid biosynthesis; L-tryptophan biosynthesis; L-tryptophan from chorismate: step 4/5. The chain is Indole-3-glycerol phosphate synthase from Parafrankia sp. (strain EAN1pec).